Consider the following 236-residue polypeptide: Purine nucleoside phosphorylase DeoD-type (236 aa).

Histidine 5 is an a purine D-ribonucleoside binding site. Phosphate is bound by residues glycine 21, arginine 25, arginine 44, and 88 to 91; that span reads RVGT. A purine D-ribonucleoside-binding positions include 180–182 and 204–205; these read DME and SD. Aspartate 205 (proton donor) is an active-site residue.

This sequence belongs to the PNP/UDP phosphorylase family. Homohexamer; trimer of homodimers.

It catalyses the reaction a purine D-ribonucleoside + phosphate = a purine nucleobase + alpha-D-ribose 1-phosphate. The catalysed reaction is a purine 2'-deoxy-D-ribonucleoside + phosphate = a purine nucleobase + 2-deoxy-alpha-D-ribose 1-phosphate. Functionally, catalyzes the reversible phosphorolytic breakdown of the N-glycosidic bond in the beta-(deoxy)ribonucleoside molecules, with the formation of the corresponding free purine bases and pentose-1-phosphate. This is Purine nucleoside phosphorylase DeoD-type from Buchnera aphidicola subsp. Schizaphis graminum (strain Sg).